An 887-amino-acid chain; its full sequence is DNA mismatch repair protein MutS (887 aa).

626–633 is an ATP binding site; that stretch reads GPNMAGKS.

This sequence belongs to the DNA mismatch repair MutS family.

In terms of biological role, this protein is involved in the repair of mismatches in DNA. It is possible that it carries out the mismatch recognition step. This protein has a weak ATPase activity. In Methanococcoides burtonii (strain DSM 6242 / NBRC 107633 / OCM 468 / ACE-M), this protein is DNA mismatch repair protein MutS.